Reading from the N-terminus, the 447-residue chain is Phosphoglucosamine mutase (447 aa).

Ser108 serves as the catalytic Phosphoserine intermediate. Ser108, Asp247, Asp249, and Asp251 together coordinate Mg(2+). The residue at position 108 (Ser108) is a Phosphoserine.

It belongs to the phosphohexose mutase family. The cofactor is Mg(2+). Post-translationally, activated by phosphorylation.

The enzyme catalyses alpha-D-glucosamine 1-phosphate = D-glucosamine 6-phosphate. Its function is as follows. Catalyzes the conversion of glucosamine-6-phosphate to glucosamine-1-phosphate. The sequence is that of Phosphoglucosamine mutase from Bordetella avium (strain 197N).